The sequence spans 525 residues: Peptide chain release factor 3 (525 aa).

Positions 9 to 276 constitute a tr-type G domain; the sequence is AKRRTFAIIS…GFTTYAPEPQ (268 aa). Residues 18 to 25, 86 to 90, and 140 to 143 each bind GTP; these read SHPDAGKT, DTPGH, and NKFD.

The protein belongs to the TRAFAC class translation factor GTPase superfamily. Classic translation factor GTPase family. PrfC subfamily.

The protein localises to the cytoplasm. Its function is as follows. Increases the formation of ribosomal termination complexes and stimulates activities of RF-1 and RF-2. It binds guanine nucleotides and has strong preference for UGA stop codons. It may interact directly with the ribosome. The stimulation of RF-1 and RF-2 is significantly reduced by GTP and GDP, but not by GMP. The sequence is that of Peptide chain release factor 3 from Francisella philomiragia subsp. philomiragia (strain ATCC 25017 / CCUG 19701 / FSC 153 / O#319-036).